The primary structure comprises 165 residues: 2-C-methyl-D-erythritol 2,4-cyclodiphosphate synthase (165 aa).

A divalent metal cation contacts are provided by aspartate 8 and histidine 10. 4-CDP-2-C-methyl-D-erythritol 2-phosphate-binding positions include 8–10 (DVH) and 34–35 (HS). Residue histidine 42 participates in a divalent metal cation binding. Residues 56 to 58 (DIG), 61 to 65 (FPDTD), 132 to 135 (TTTE), phenylalanine 139, and arginine 142 contribute to the 4-CDP-2-C-methyl-D-erythritol 2-phosphate site.

Belongs to the IspF family. Homotrimer. A divalent metal cation is required as a cofactor.

The catalysed reaction is 4-CDP-2-C-methyl-D-erythritol 2-phosphate = 2-C-methyl-D-erythritol 2,4-cyclic diphosphate + CMP. It functions in the pathway isoprenoid biosynthesis; isopentenyl diphosphate biosynthesis via DXP pathway; isopentenyl diphosphate from 1-deoxy-D-xylulose 5-phosphate: step 4/6. Its function is as follows. Involved in the biosynthesis of isopentenyl diphosphate (IPP) and dimethylallyl diphosphate (DMAPP), two major building blocks of isoprenoid compounds. Catalyzes the conversion of 4-diphosphocytidyl-2-C-methyl-D-erythritol 2-phosphate (CDP-ME2P) to 2-C-methyl-D-erythritol 2,4-cyclodiphosphate (ME-CPP) with a corresponding release of cytidine 5-monophosphate (CMP). The sequence is that of 2-C-methyl-D-erythritol 2,4-cyclodiphosphate synthase from Halothermothrix orenii (strain H 168 / OCM 544 / DSM 9562).